A 248-amino-acid polypeptide reads, in one-letter code: Exosome complex component Rrp41 (248 aa).

This sequence belongs to the RNase PH family. Rrp41 subfamily. As to quaternary structure, component of the archaeal exosome complex. Forms a hexameric ring-like arrangement composed of 3 Rrp41-Rrp42 heterodimers. The hexameric ring associates with a trimer of Rrp4 and/or Csl4 subunits.

It is found in the cytoplasm. Its function is as follows. Catalytic component of the exosome, which is a complex involved in RNA degradation. Has 3'-&gt;5' exoribonuclease activity. Can also synthesize heteromeric RNA-tails. The protein is Exosome complex component Rrp41 of Thermoplasma volcanium (strain ATCC 51530 / DSM 4299 / JCM 9571 / NBRC 15438 / GSS1).